Reading from the N-terminus, the 851-residue chain is Envelope glycoprotein gp160 (851 aa).

An N-terminal signal peptide occupies residues 1–31 (MKVMGIQRNCQQWWIWGILGFWMLMICNGMG). The Extracellular portion of the chain corresponds to 32 to 672 (NLWVTVYYGV…ITNWLWYIKI (641 aa)). Cys53 and Cys73 are joined by a disulfide. N-linked (GlcNAc...) asparagine; by host glycosylation is found at Asn87, Asn135, Asn141, Asn153, Asn157, Asn183, and Asn194. Cystine bridges form between Cys118/Cys202, Cys125/Cys193, Cys130/Cys154, Cys215/Cys244, and Cys225/Cys236. The tract at residues 130–153 (CNAIKNNTKVTNNSINSANDEMKN) is V1. Positions 154-193 (CSFNITTELRDKKRKAYALFYKLDIVPLNNGSTDYRLINC) are V2. N-linked (GlcNAc...) asparagine; by host glycosylation is found at Asn238, Asn259, Asn273, Asn286, Asn298, Asn328, Asn335, and Asn351. The interval 293-326 (CTRPSNNTRESIRIGPGQTFYATGDIIGDIRQAH) is V3. Cys293 and Cys327 form a disulfide bridge. Residues 359 to 369 (SSGGDLEITTH) are CD4-binding loop. 2 disulfides stabilise this stretch: Cys373–Cys433 and Cys380–Cys406. A V4 region spans residues 380-406 (CNTSNLFNSTKLELFNSSTNLNITLQC). Asn381, Asn387, Asn395, Asn401, and Asn436 each carry an N-linked (GlcNAc...) asparagine; by host glycan. V5 stretches follow at residues 449–460 (EPHSTKEIFRPE) and 451–460 (HSTKEIFRPE). Positions 501–520 (AALGALFLGFLGAAGSTMGA) are fusion peptide. The immunosuppression stretch occupies residues 562-580 (KQLQTRVLAIERHLRDQQL). A disulfide bridge links Cys586 with Cys592. N-linked (GlcNAc...) asparagine; by host glycans are attached at residues Asn599, Asn604, Asn613, Asn625, and Asn662. Residues 621-655 (REISNYTDIIYNLLEVSQNQQDKNEKDLLALDKWE) adopt a coiled-coil conformation. An MPER; binding to GalCer region spans residues 650-671 (ALDKWENLWNWFNITNWLWYIK). Residues 673–693 (FIMIVGGVIGLRIIFAVLSIV) form a helical membrane-spanning segment. Residues 694 to 851 (NRVRQGYSPL…IRQGLEAALQ (158 aa)) lie on the Cytoplasmic side of the membrane. Positions 700–703 (YSPL) match the YXXL motif; contains endocytosis signal motif. A lipid anchor (S-palmitoyl cysteine; by host) is attached at Cys752.

The protein belongs to the HIV-1 env protein family. The mature envelope protein (Env) consists of a homotrimer of non-covalently associated gp120-gp41 heterodimers. The resulting complex protrudes from the virus surface as a spike. There seems to be as few as 10 spikes on the average virion. Interacts with host CD4, CCR5 and CXCR4. Gp120 also interacts with the C-type lectins CD209/DC-SIGN and CLEC4M/DC-SIGNR (collectively referred to as DC-SIGN(R)). Gp120 and gp41 interact with GalCer. Gp120 interacts with host ITGA4/ITGB7 complex; on CD4+ T-cells, this interaction results in rapid activation of integrin ITGAL/LFA-1, which facilitates efficient cell-to-cell spreading of HIV-1. Gp120 interacts with cell-associated heparan sulfate; this interaction increases virus infectivity on permissive cells and may be involved in infection of CD4- cells. In terms of assembly, the mature envelope protein (Env) consists of a homotrimer of non-covalently associated gp120-gp41 heterodimers. The resulting complex protrudes from the virus surface as a spike. There seems to be as few as 10 spikes on the average virion. Post-translationally, highly glycosylated by host. The high number of glycan on the protein is reffered to as 'glycan shield' because it contributes to hide protein sequence from adaptive immune system. In terms of processing, palmitoylation of the transmembrane protein and of Env polyprotein (prior to its proteolytic cleavage) is essential for their association with host cell membrane lipid rafts. Palmitoylation is therefore required for envelope trafficking to classical lipid rafts, but not for viral replication. Specific enzymatic cleavages in vivo yield mature proteins. Envelope glycoproteins are synthesized as an inactive precursor that is heavily N-glycosylated and processed likely by host cell furin in the Golgi to yield the mature SU and TM proteins. The cleavage site between SU and TM requires the minimal sequence [KR]-X-[KR]-R. About 2 of the 9 disulfide bonds of gp41 are reduced by P4HB/PDI, following binding to CD4 receptor.

The protein resides in the virion membrane. Its subcellular location is the host cell membrane. It localises to the host endosome membrane. Its function is as follows. Oligomerizes in the host endoplasmic reticulum into predominantly trimers. In a second time, gp160 transits in the host Golgi, where glycosylation is completed. The precursor is then proteolytically cleaved in the trans-Golgi and thereby activated by cellular furin or furin-like proteases to produce gp120 and gp41. Functionally, attaches the virus to the host lymphoid cell by binding to the primary receptor CD4. This interaction induces a structural rearrangement creating a high affinity binding site for a chemokine coreceptor like CXCR4 and/or CCR5. Acts as a ligand for CD209/DC-SIGN and CLEC4M/DC-SIGNR, which are respectively found on dendritic cells (DCs), and on endothelial cells of liver sinusoids and lymph node sinuses. These interactions allow capture of viral particles at mucosal surfaces by these cells and subsequent transmission to permissive cells. HIV subverts the migration properties of dendritic cells to gain access to CD4+ T-cells in lymph nodes. Virus transmission to permissive T-cells occurs either in trans (without DCs infection, through viral capture and transmission), or in cis (following DCs productive infection, through the usual CD4-gp120 interaction), thereby inducing a robust infection. In trans infection, bound virions remain infectious over days and it is proposed that they are not degraded, but protected in non-lysosomal acidic organelles within the DCs close to the cell membrane thus contributing to the viral infectious potential during DCs' migration from the periphery to the lymphoid tissues. On arrival at lymphoid tissues, intact virions recycle back to DCs' cell surface allowing virus transmission to CD4+ T-cells. Acts as a class I viral fusion protein. Under the current model, the protein has at least 3 conformational states: pre-fusion native state, pre-hairpin intermediate state, and post-fusion hairpin state. During fusion of viral and target intracellular membranes, the coiled coil regions (heptad repeats) assume a trimer-of-hairpins structure, positioning the fusion peptide in close proximity to the C-terminal region of the ectodomain. The formation of this structure appears to drive apposition and subsequent fusion of viral and target cell membranes. Complete fusion occurs in host cell endosomes and is dynamin-dependent, however some lipid transfer might occur at the plasma membrane. The virus undergoes clathrin-dependent internalization long before endosomal fusion, thus minimizing the surface exposure of conserved viral epitopes during fusion and reducing the efficacy of inhibitors targeting these epitopes. Membranes fusion leads to delivery of the nucleocapsid into the cytoplasm. The sequence is that of Envelope glycoprotein gp160 from Homo sapiens (Human).